A 469-amino-acid polypeptide reads, in one-letter code: MAQTLYDKLWNTHVVHTEEDGTTLLYIDRQLLHEVTSPQAFEGLKIAQRPVWRISANLAVSDHNVPTTDRSHGIADPVSKLQVDTLDSNCDAFGITQFKMNDVRQGIVHIIGPEQGATLPGMTIVCGDSHTSTHGAFGALAHGIGTSEVEHVLATQTLLQKKSKNMLVKVEGALPRGCTAKDIVLAIIGKIGTAGGTGYAIEFGGSTIRALTMEGRMTVCNMAIEAGARAGMVAVDDTTIDYLKGRPFVPTGAEWDQAVEYWRQFKSDDGAQFDRVVELNAAEIVPQVTWGTSPEMVTSIDGRVPDPEREKDPVKRDAMERALAYMALEPNTPIESIKVDKIFIGSCTNARIEDIRAAAYVVKKLNRRVASNVRLAMVVPGSGLVKAQAEREGLDKVFTDAGFEWREPGCSMCLAMNADRLEPGERCASTSNRNFEGRQGAGGRTHLVSPAMAAAAAIEGHFVDIRQLG.

3 residues coordinate [4Fe-4S] cluster: C347, C410, and C413.

Belongs to the aconitase/IPM isomerase family. LeuC type 1 subfamily. In terms of assembly, heterodimer of LeuC and LeuD. [4Fe-4S] cluster serves as cofactor.

The enzyme catalyses (2R,3S)-3-isopropylmalate = (2S)-2-isopropylmalate. It participates in amino-acid biosynthesis; L-leucine biosynthesis; L-leucine from 3-methyl-2-oxobutanoate: step 2/4. Catalyzes the isomerization between 2-isopropylmalate and 3-isopropylmalate, via the formation of 2-isopropylmaleate. This chain is 3-isopropylmalate dehydratase large subunit, found in Burkholderia orbicola (strain MC0-3).